The following is a 115-amino-acid chain: NADH-ubiquinone oxidoreductase chain 3 (115 aa).

Helical transmembrane passes span 1-21, 55-75, and 87-107; these read MITL…LLII, FFLV…LFPL, and AIIL…YEWL.

Belongs to the complex I subunit 3 family.

Its subcellular location is the mitochondrion membrane. The catalysed reaction is a ubiquinone + NADH + 5 H(+)(in) = a ubiquinol + NAD(+) + 4 H(+)(out). Its function is as follows. Core subunit of the mitochondrial membrane respiratory chain NADH dehydrogenase (Complex I) that is believed to belong to the minimal assembly required for catalysis. Complex I functions in the transfer of electrons from NADH to the respiratory chain. The immediate electron acceptor for the enzyme is believed to be ubiquinone. This Myxine glutinosa (Atlantic hagfish) protein is NADH-ubiquinone oxidoreductase chain 3 (MT-ND3).